Here is a 183-residue protein sequence, read N- to C-terminus: UPF0200 protein MmarC7_0527 (183 aa).

8–15 (GMPGSGKS) lines the ATP pocket.

It belongs to the UPF0200 family.

The chain is UPF0200 protein MmarC7_0527 from Methanococcus maripaludis (strain C7 / ATCC BAA-1331).